A 206-amino-acid polypeptide reads, in one-letter code: Large ribosomal subunit protein uL4 (206 aa).

It belongs to the universal ribosomal protein uL4 family. As to quaternary structure, part of the 50S ribosomal subunit.

Its function is as follows. One of the primary rRNA binding proteins, this protein initially binds near the 5'-end of the 23S rRNA. It is important during the early stages of 50S assembly. It makes multiple contacts with different domains of the 23S rRNA in the assembled 50S subunit and ribosome. Functionally, forms part of the polypeptide exit tunnel. The polypeptide is Large ribosomal subunit protein uL4 (Rhodopseudomonas palustris (strain HaA2)).